A 224-amino-acid polypeptide reads, in one-letter code: MAELYVKPGNKERGWNDPPQFSYGLQTQAGGPRRSLLTKRVAAPQDGSPRVPASETSPGPPPMGPPPPSSKAPRSPPVGSGPASGVEPTSFPVESEAVMEDVLRPLEQALEDCRGHTRKQVCDDISRRLALLQEQWAGGKLSIPVKKRMALLVQELSSHRWDAADDIHRSLMVDHVTEVSQWMVGVKRLIAEKRSLFSEEAANEEKSAATAEKNHTIPGFQQAS.

Disordered stretches follow at residues 1–90 (MAEL…EPTS) and 201–224 (AANE…QQAS). A phosphoserine mark is found at serine 48, serine 57, and serine 75. Positions 58–76 (PGPPPMGPPPPSSKAPRSP) are enriched in pro residues. Over residues 201 to 215 (AANEEKSAATAEKNH) the composition is skewed to basic and acidic residues.

It belongs to the SRA1 family. As to quaternary structure, SRA1 RNA exists in a ribonucleoprotein complex containing NCOA1. The RNA also forms a complex with PUS1 and RARG in the nucleus. Interacts with AR. Highly expressed in liver and skeletal muscle and to a lesser extent in brain. Also expressed in both normal and tumorigenic breast epithelial cell lines. Significantly up-regulated in human tumors of the breast, ovary, and uterus.

It localises to the nucleus. The protein resides in the cytoplasm. Functionally, functional RNA which acts as a transcriptional coactivator that selectively enhances steroid receptor-mediated transactivation ligand-independently through a mechanism involving the modulating N-terminal domain (AF-1) of steroid receptors. Also mediates transcriptional coactivation of steroid receptors ligand-dependently through the steroid-binding domain (AF-2). Enhances cellular proliferation and differentiation and promotes apoptosis in vivo. May play a role in tumorigenesis. This is Steroid receptor RNA activator 1 from Homo sapiens (Human).